Here is a 156-residue protein sequence, read N- to C-terminus: Arginine repressor (156 aa).

This sequence belongs to the ArgR family.

It is found in the cytoplasm. The protein operates within amino-acid biosynthesis; L-arginine biosynthesis [regulation]. In terms of biological role, regulates arginine biosynthesis genes. In Shewanella woodyi (strain ATCC 51908 / MS32), this protein is Arginine repressor.